Consider the following 428-residue polypeptide: D-amino acid dehydrogenase (428 aa).

3-17 (VVILGSGVVGVASAY) lines the FAD pocket.

The protein belongs to the DadA oxidoreductase family. FAD is required as a cofactor.

It catalyses the reaction a D-alpha-amino acid + A + H2O = a 2-oxocarboxylate + AH2 + NH4(+). It functions in the pathway amino-acid degradation; D-alanine degradation; NH(3) and pyruvate from D-alanine: step 1/1. Oxidative deamination of D-amino acids. In Burkholderia cenocepacia (strain HI2424), this protein is D-amino acid dehydrogenase.